A 236-amino-acid polypeptide reads, in one-letter code: Ribose-5-phosphate isomerase A (236 aa).

Substrate is bound by residues 29-32 (SGST), 86-89 (DGAD), and 99-102 (KGGG). Residue glutamate 108 is the Proton acceptor of the active site. Lysine 126 lines the substrate pocket.

The protein belongs to the ribose 5-phosphate isomerase family. As to quaternary structure, homodimer.

The catalysed reaction is aldehydo-D-ribose 5-phosphate = D-ribulose 5-phosphate. Its pathway is carbohydrate degradation; pentose phosphate pathway; D-ribose 5-phosphate from D-ribulose 5-phosphate (non-oxidative stage): step 1/1. Catalyzes the reversible conversion of ribose-5-phosphate to ribulose 5-phosphate. This is Ribose-5-phosphate isomerase A from Prochlorococcus marinus (strain NATL2A).